A 331-amino-acid chain; its full sequence is MDPGTLNSVINRLLEAREKPGKIVQLSETEIKQLCFVSRDIFLRQPNLLELEAPVKICGDIHGQYPDLLRLFEHGGYPPNSNYLFLGDYVDRGKQSLETICLLLAYKIKFPENFFLLRGNHESASINRIYGFYDECKRRFSVKIWRIFTDCFNCLPVAALIDERIFCMHGGLSPELLSLRQIRDIRRPTDIPDRGLLCDLLWSDPDKDVRGWGPNDRGVSYTFGSDIVSGFLKRLDLDLICRAHQVVEDGFEFFANKQLVTIFSAPNYCGEFDNAGAMMSVSEDLTCSFQILKSNDKKSKFSFGSRGGAKTSFPYPKVKSILSSQNSKEYN.

Residue M1 is modified to N-acetylmethionine. D60, H62, D88, and N120 together coordinate Mn(2+). The Proton donor role is filled by H121. Mn(2+)-binding residues include H169 and H244.

This sequence belongs to the PPP phosphatase family. PP-1 subfamily. It depends on Mn(2+) as a cofactor. Expressed in roots, rosettes and flowers.

It is found in the nucleus. It localises to the cytoplasm. It catalyses the reaction O-phospho-L-seryl-[protein] + H2O = L-seryl-[protein] + phosphate. It carries out the reaction O-phospho-L-threonyl-[protein] + H2O = L-threonyl-[protein] + phosphate. Its activity is regulated as follows. Phosphatase activity is strongly reduced by the protein phosphatase inhibitor 2 (I-2). Serine/threonine-protein phosphatase that possesses phosphatase activity toward para-nitrophenyl phosphate (pNPP) in vitro. In Arabidopsis thaliana (Mouse-ear cress), this protein is Serine/threonine-protein phosphatase PP1 isozyme 7.